The primary structure comprises 434 residues: Glutamate-1-semialdehyde 2,1-aminomutase 1 (434 aa).

Residue Lys270 is modified to N6-(pyridoxal phosphate)lysine.

It belongs to the class-III pyridoxal-phosphate-dependent aminotransferase family. HemL subfamily. As to quaternary structure, homodimer. Pyridoxal 5'-phosphate serves as cofactor.

Its subcellular location is the cytoplasm. It catalyses the reaction (S)-4-amino-5-oxopentanoate = 5-aminolevulinate. Its pathway is porphyrin-containing compound metabolism; protoporphyrin-IX biosynthesis; 5-aminolevulinate from L-glutamyl-tRNA(Glu): step 2/2. This is Glutamate-1-semialdehyde 2,1-aminomutase 1 from Bacillus anthracis (strain CDC 684 / NRRL 3495).